A 398-amino-acid polypeptide reads, in one-letter code: Succinate--CoA ligase [ADP-forming] subunit beta (398 aa).

An ATP-grasp domain is found at 9 to 254 (KRLLHTYGAP…LSEEDEKEIE (246 aa)). Residues lysine 46, 53 to 55 (GRG), glutamate 109, alanine 112, and glutamate 117 contribute to the ATP site. Mg(2+) contacts are provided by asparagine 209 and aspartate 223. Residues asparagine 274 and 331 to 333 (GIM) contribute to the substrate site.

This sequence belongs to the succinate/malate CoA ligase beta subunit family. In terms of assembly, heterotetramer of two alpha and two beta subunits. Mg(2+) is required as a cofactor.

The catalysed reaction is succinate + ATP + CoA = succinyl-CoA + ADP + phosphate. It catalyses the reaction GTP + succinate + CoA = succinyl-CoA + GDP + phosphate. It functions in the pathway carbohydrate metabolism; tricarboxylic acid cycle; succinate from succinyl-CoA (ligase route): step 1/1. Succinyl-CoA synthetase functions in the citric acid cycle (TCA), coupling the hydrolysis of succinyl-CoA to the synthesis of either ATP or GTP and thus represents the only step of substrate-level phosphorylation in the TCA. The beta subunit provides nucleotide specificity of the enzyme and binds the substrate succinate, while the binding sites for coenzyme A and phosphate are found in the alpha subunit. This is Succinate--CoA ligase [ADP-forming] subunit beta from Brucella anthropi (strain ATCC 49188 / DSM 6882 / CCUG 24695 / JCM 21032 / LMG 3331 / NBRC 15819 / NCTC 12168 / Alc 37) (Ochrobactrum anthropi).